Reading from the N-terminus, the 258-residue chain is Acyl-[acyl-carrier-protein]--UDP-N-acetylglucosamine O-acyltransferase (258 aa).

It belongs to the transferase hexapeptide repeat family. LpxA subfamily. As to quaternary structure, homotrimer.

It localises to the cytoplasm. The catalysed reaction is a (3R)-hydroxyacyl-[ACP] + UDP-N-acetyl-alpha-D-glucosamine = a UDP-3-O-[(3R)-3-hydroxyacyl]-N-acetyl-alpha-D-glucosamine + holo-[ACP]. It participates in glycolipid biosynthesis; lipid IV(A) biosynthesis; lipid IV(A) from (3R)-3-hydroxytetradecanoyl-[acyl-carrier-protein] and UDP-N-acetyl-alpha-D-glucosamine: step 1/6. Its function is as follows. Involved in the biosynthesis of lipid A, a phosphorylated glycolipid that anchors the lipopolysaccharide to the outer membrane of the cell. The polypeptide is Acyl-[acyl-carrier-protein]--UDP-N-acetylglucosamine O-acyltransferase (Syntrophobacter fumaroxidans (strain DSM 10017 / MPOB)).